The primary structure comprises 499 residues: Bestrophin homolog 22 (499 aa).

4 helical membrane-spanning segments follow: residues 29–49 (WKAV…ISCI), 77–97 (IPLT…WGSI), 235–255 (LVYP…CLIG), and 267–287 (GIDL…MGWM). Over residues 417 to 432 (HNAKHAKQRGLERANS) the composition is skewed to basic and acidic residues. Disordered stretches follow at residues 417-455 (HNAK…ANGS) and 474-499 (TSNP…TSRH).

This sequence belongs to the anion channel-forming bestrophin (TC 1.A.46) family. Calcium-sensitive chloride channel subfamily. In terms of assembly, forms oligomers.

The protein resides in the cell membrane. Its function is as follows. Forms chloride channels. This chain is Bestrophin homolog 22 (best-22), found in Caenorhabditis elegans.